Consider the following 239-residue polypeptide: Phosphoribosylaminoimidazole-succinocarboxamide synthase (239 aa).

The protein belongs to the SAICAR synthetase family.

It carries out the reaction 5-amino-1-(5-phospho-D-ribosyl)imidazole-4-carboxylate + L-aspartate + ATP = (2S)-2-[5-amino-1-(5-phospho-beta-D-ribosyl)imidazole-4-carboxamido]succinate + ADP + phosphate + 2 H(+). It participates in purine metabolism; IMP biosynthesis via de novo pathway; 5-amino-1-(5-phospho-D-ribosyl)imidazole-4-carboxamide from 5-amino-1-(5-phospho-D-ribosyl)imidazole-4-carboxylate: step 1/2. This is Phosphoribosylaminoimidazole-succinocarboxamide synthase from Chlorobium luteolum (strain DSM 273 / BCRC 81028 / 2530) (Pelodictyon luteolum).